The sequence spans 429 residues: Threonine synthase (429 aa).

The residue at position 107 (K107) is an N6-(pyridoxal phosphate)lysine.

Belongs to the threonine synthase family. Requires pyridoxal 5'-phosphate as cofactor.

The enzyme catalyses O-phospho-L-homoserine + H2O = L-threonine + phosphate. It functions in the pathway amino-acid biosynthesis; L-threonine biosynthesis; L-threonine from L-aspartate: step 5/5. Its function is as follows. Catalyzes the gamma-elimination of phosphate from L-phosphohomoserine and the beta-addition of water to produce L-threonine. This chain is Threonine synthase (thrC), found in Serratia marcescens.